The chain runs to 96 residues: UPF0235 protein Spro_4033 (96 aa).

It belongs to the UPF0235 family.

This Serratia proteamaculans (strain 568) protein is UPF0235 protein Spro_4033.